The sequence spans 752 residues: Putative xanthine dehydrogenase molybdenum-binding subunit XdhA (752 aa).

Mo-molybdopterin contacts are provided by glutamine 206, phenylalanine 237, arginine 350, and alanine 516.

The protein belongs to the xanthine dehydrogenase family. In terms of assembly, heterotrimer of XdhA, XdhB and XdhC. Mo-molybdopterin serves as cofactor.

The enzyme catalyses xanthine + NAD(+) + H2O = urate + NADH + H(+). The catalysed reaction is hypoxanthine + NAD(+) + H2O = xanthine + NADH + H(+). It functions in the pathway purine metabolism; hypoxanthine degradation; urate from hypoxanthine: step 1/2. Its pathway is purine metabolism; hypoxanthine degradation; urate from hypoxanthine: step 2/2. In terms of biological role, presumed to be a dehydrogenase, but possibly an oxidase. Participates in limited purine salvage (requires aspartate) but does not support aerobic growth on purines as the sole carbon source (purine catabolism). Deletion results in increased adenine sensitivity, suggesting that this protein contributes to the conversion of adenine to guanine nucleotides during purine salvage. The polypeptide is Putative xanthine dehydrogenase molybdenum-binding subunit XdhA (xdhA) (Escherichia coli (strain K12)).